The sequence spans 932 residues: Chaperone protein ClpC3, chloroplastic (932 aa).

The tract at residues methionine 1 to threonine 20 is disordered. The N-terminal 48 residues, methionine 1 to lysine 48, are a transit peptide targeting the chloroplast. Residues phenylalanine 99 to aspartate 240 form the Clp R domain. 2 repeat regions span residues phenylalanine 102–glycine 167 and phenylalanine 177–aspartate 240. The i stretch occupies residues leucine 264–proline 511. Glycine 309–threonine 316 is a binding site for ATP. The UVR domain occupies glutamate 518–glutamate 553. Residues valine 579 to serine 770 form an II region. Glycine 653–serine 660 contributes to the ATP binding site.

Belongs to the ClpA/ClpB family. ClpC subfamily.

Its subcellular location is the plastid. The protein localises to the chloroplast. In terms of biological role, molecular chaperone that may interact with a ClpP-like protease involved in degradation of denatured proteins in the chloroplast. The protein is Chaperone protein ClpC3, chloroplastic (CLPC3) of Oryza sativa subsp. japonica (Rice).